The following is a 313-amino-acid chain: Ethylene-responsive transcription factor ERN2 (313 aa).

The segment covering 1–10 has biased composition (basic and acidic residues); the sequence is MEIQFDEPKK. The tract at residues 1–29 is disordered; the sequence is MEIQFDEPKKSLRPKKVNKFKGRNKKSET. Residues 11–24 show a composition bias toward basic residues; sequence SLRPKKVNKFKGRN. Residues 32-89 constitute a DNA-binding region (AP2/ERF); that stretch reads KFVGVRQRPSGRYVAEIKDTTQNIRMWLGTFETAEEAARAYDEAATLLRGSKTRTNFV. Disordered stretches follow at residues 108–143 and 157–204; these read NRKK…TSST and TSAS…SSST. Composition is skewed to low complexity over residues 122–143 and 157–193; these read SSTT…TSST and TSAS…TNVN.

Belongs to the AP2/ERF transcription factor family. ERF subfamily. As to expression, expressed in roots, root hairs and leaves. Expressed in root epidermis and root hairs.

Its subcellular location is the nucleus. Transcription factor involved in symbiotic nodule signaling in response to rhizobial Nod factors (NFs). Binds to the GCC box (NF-responsive box) of ENOD11 promoter. Acts as a transcriptional activator of NF-responsive box-containing target gene promoters in root hairs. Involved in early stages of root nodule development. Functions redundantly with ERN1. Is essential with ERN1 for the initiation of root hair infection, and nodule organogenesis and development. Required for accurate expression of the NF signaling genes ENOD11 and ENOD12. This Medicago truncatula (Barrel medic) protein is Ethylene-responsive transcription factor ERN2.